Consider the following 119-residue polypeptide: Ribonuclease P protein component (119 aa).

Belongs to the RnpA family. Consists of a catalytic RNA component (M1 or rnpB) and a protein subunit.

The enzyme catalyses Endonucleolytic cleavage of RNA, removing 5'-extranucleotides from tRNA precursor.. Its function is as follows. RNaseP catalyzes the removal of the 5'-leader sequence from pre-tRNA to produce the mature 5'-terminus. It can also cleave other RNA substrates such as 4.5S RNA. The protein component plays an auxiliary but essential role in vivo by binding to the 5'-leader sequence and broadening the substrate specificity of the ribozyme. This chain is Ribonuclease P protein component, found in Borreliella burgdorferi (strain ATCC 35210 / DSM 4680 / CIP 102532 / B31) (Borrelia burgdorferi).